Here is a 386-residue protein sequence, read N- to C-terminus: Phosphoglycerate kinase (386 aa).

Residues 21–23 (DLN), R36, 59–62 (HLGR), R112, and R145 contribute to the substrate site. Residues K196, E313, and 339-342 (GGDT) each bind ATP.

Belongs to the phosphoglycerate kinase family. Monomer.

The protein localises to the cytoplasm. The catalysed reaction is (2R)-3-phosphoglycerate + ATP = (2R)-3-phospho-glyceroyl phosphate + ADP. It participates in carbohydrate degradation; glycolysis; pyruvate from D-glyceraldehyde 3-phosphate: step 2/5. The polypeptide is Phosphoglycerate kinase (Haemophilus influenzae (strain PittGG)).